The sequence spans 322 residues: DNA primase small subunit PriS (322 aa).

Catalysis depends on residues D86, D88, and D226.

It belongs to the eukaryotic-type primase small subunit family. As to quaternary structure, heterodimer of a small subunit (PriS) and a large subunit (PriL). The cofactor is Mg(2+). Requires Mn(2+) as cofactor.

Functionally, catalytic subunit of DNA primase, an RNA polymerase that catalyzes the synthesis of short RNA molecules used as primers for DNA polymerase during DNA replication. The small subunit contains the primase catalytic core and has DNA synthesis activity on its own. Binding to the large subunit stabilizes and modulates the activity, increasing the rate of DNA synthesis while decreasing the length of the DNA fragments, and conferring RNA synthesis capability. The DNA polymerase activity may enable DNA primase to also catalyze primer extension after primer synthesis. May also play a role in DNA repair. The sequence is that of DNA primase small subunit PriS from Thermoplasma acidophilum (strain ATCC 25905 / DSM 1728 / JCM 9062 / NBRC 15155 / AMRC-C165).